Consider the following 440-residue polypeptide: Transposon Ty1-BR Gag polyprotein (440 aa).

3 stretches are compositionally biased toward polar residues: residues 1–10 (MESQQLSNYP), 48–60 (TKAN…TPAS), and 127–152 (QSQF…GNTF). 3 disordered regions span residues 1-93 (MESQ…MMTQ), 126-173 (PQSQ…RPPP), and 352-440 (GSRN…PETY). A compositionally biased stretch (low complexity) spans 153–165 (TDSSSADSDMTST). An RNA-binding region spans residues 299–401 (NNGIHINNKV…NSKSKTARAH (103 aa)). Low complexity predominate over residues 402–418 (NVSTSNNSPSTDNDSIS). Ser-416 bears the Phosphoserine mark. The span at 419–428 (KSTTEPIQLN) shows a compositional bias: polar residues. Residues 429–440 (NKHDLHLRPETY) show a composition bias toward basic and acidic residues.

In terms of assembly, homotrimer.

The protein resides in the cytoplasm. In terms of biological role, capsid protein (CA) is the structural component of the virus-like particle (VLP), forming the shell that encapsulates the retrotransposons dimeric RNA genome. The particles are assembled from trimer-clustered units and there are holes in the capsid shells that allow for the diffusion of macromolecules. CA also has nucleocapsid-like chaperone activity, promoting primer tRNA(i)-Met annealing to the multipartite primer-binding site (PBS), dimerization of Ty1 RNA and initiation of reverse transcription. The sequence is that of Transposon Ty1-BR Gag polyprotein (TY1A-BR) from Saccharomyces cerevisiae (strain ATCC 204508 / S288c) (Baker's yeast).